Reading from the N-terminus, the 522-residue chain is MEELQGYFEKDRSRQQPFLYPLLFQEYIYALAHDRGLNRNGSIFYEPLEVFGYDSKSSLALVKRLITRIYQQHFFLSSVNDSNQNQFVGHHHTNFFYSRFYSQMISEGFAIIVEIPFSLQLVSYLKEKEIPKSHNLRSIHSIFPFLEDKLLHFNYVSDILIPHPIHMEILVQILQCWIQDVPLLHFLRFFLHEYHNWNSFFITQNKSIYLFSKETKRLFRFLYNSYVYECEFVFVFLRKYSSYLRFTSFRTFLERRYFYGKMEHLQTEHLIIVCCDYFNGTLWSFKDPFMHYARCQGKAILVSKGTHLLMKKWKYNFVNLWQYYFHFWYQSYRIHINQLSKHSFHFLGYLSSLLKNSSTVRNQMLDNSFLIDTLTTKFDTAVPVIFLIVSLSKAQFCTVSGHPISKPIWTDLSDSGIIERFGRICRNLSHYHSGSSKKQGLYRIKYILRLSCARTLARKHKSTVRTFLQRLGSRLLEEFFTEGEQDLSLILPKAIPFPFQGSHRERIWYLDIIRINDLVNRL.

This sequence belongs to the intron maturase 2 family. MatK subfamily.

It localises to the plastid. Its subcellular location is the chloroplast. Functionally, usually encoded in the trnK tRNA gene intron. Probably assists in splicing its own and other chloroplast group II introns. The chain is Maturase K from Pillansia templemannii.